The chain runs to 272 residues: NADPH-dependent 7-cyano-7-deazaguanine reductase (272 aa).

A substrate-binding site is contributed by 82-84 (IES). 84 to 85 (SK) contacts NADPH. Cys178 (thioimide intermediate) is an active-site residue. The Proton donor role is filled by Asp185. Position 217 to 218 (217 to 218 (HE)) interacts with substrate. 246–247 (RG) lines the NADPH pocket.

The protein belongs to the GTP cyclohydrolase I family. QueF type 2 subfamily. As to quaternary structure, homodimer.

It is found in the cytoplasm. It catalyses the reaction 7-aminomethyl-7-carbaguanine + 2 NADP(+) = 7-cyano-7-deazaguanine + 2 NADPH + 3 H(+). It participates in tRNA modification; tRNA-queuosine biosynthesis. Functionally, catalyzes the NADPH-dependent reduction of 7-cyano-7-deazaguanine (preQ0) to 7-aminomethyl-7-deazaguanine (preQ1). This is NADPH-dependent 7-cyano-7-deazaguanine reductase from Stenotrophomonas maltophilia (strain K279a).